A 634-amino-acid polypeptide reads, in one-letter code: Heat shock 70-related protein 1, mitochondrial (634 aa).

The N-terminal 20 residues, 1 to 20 (MFARRVCGSAAASAACLARH), are a transit peptide targeting the mitochondrion. Residues 538-614 (SEQHAEADRV…AAATDKLQKA (77 aa)) adopt a coiled-coil conformation.

This sequence belongs to the heat shock protein 70 family.

Its subcellular location is the mitochondrion. The protein is Heat shock 70-related protein 1, mitochondrial (HSP70.1) of Leishmania major.